A 257-amino-acid polypeptide reads, in one-letter code: NAD-capped RNA hydrolase NudC (257 aa).

Residue Arg-69 participates in substrate binding. Zn(2+) is bound by residues Cys-98 and Cys-101. Position 111 (Glu-111) interacts with substrate. The Zn(2+) site is built by Cys-116 and Cys-119. Tyr-124 is a binding site for substrate. The region spanning 125–248 (PQIAPCIIVA…TVARRLIEDT (124 aa)) is the Nudix hydrolase domain. 3 residues coordinate a divalent metal cation: Ala-158, Glu-174, and Glu-178. The Nudix box signature appears at 159–180 (GFVEVGETLEQAVAREVMEESG). 192–199 (QPWPFPQS) is a binding site for substrate. Glu-219 contributes to the a divalent metal cation binding site. Ala-241 contributes to the substrate binding site.

This sequence belongs to the Nudix hydrolase family. NudC subfamily. Homodimer. Mg(2+) is required as a cofactor. It depends on Mn(2+) as a cofactor. Requires Zn(2+) as cofactor.

The catalysed reaction is a 5'-end NAD(+)-phospho-ribonucleoside in mRNA + H2O = a 5'-end phospho-adenosine-phospho-ribonucleoside in mRNA + beta-nicotinamide D-ribonucleotide + 2 H(+). It catalyses the reaction NAD(+) + H2O = beta-nicotinamide D-ribonucleotide + AMP + 2 H(+). It carries out the reaction NADH + H2O = reduced beta-nicotinamide D-ribonucleotide + AMP + 2 H(+). MRNA decapping enzyme that specifically removes the nicotinamide adenine dinucleotide (NAD) cap from a subset of mRNAs by hydrolyzing the diphosphate linkage to produce nicotinamide mononucleotide (NMN) and 5' monophosphate mRNA. The NAD-cap is present at the 5'-end of some mRNAs and stabilizes RNA against 5'-processing. Has preference for mRNAs with a 5'-end purine. Catalyzes the hydrolysis of a broad range of dinucleotide pyrophosphates. This is NAD-capped RNA hydrolase NudC from Citrobacter koseri (strain ATCC BAA-895 / CDC 4225-83 / SGSC4696).